The sequence spans 111 residues: Large ribosomal subunit protein P1 (111 aa).

Positions 84 to 111 are disordered; it reads PAEAAAAEEKKEEEKEESDEDMGFGLFD.

The protein belongs to the eukaryotic ribosomal protein P1/P2 family. In terms of assembly, P1 and P2 exist as dimers at the large ribosomal subunit. Post-translationally, phosphorylated.

Functionally, plays an important role in the elongation step of protein synthesis. In Aspergillus fumigatus (strain ATCC MYA-4609 / CBS 101355 / FGSC A1100 / Af293) (Neosartorya fumigata), this protein is Large ribosomal subunit protein P1.